An 888-amino-acid chain; its full sequence is MTQMTVEQFAHDLGMLPNLLLEQLQAAGVAKRSAADFVTEQDKTQLLDYLRKSHGSSGSRTKITLARRQTTEIKQSDSAGRPRTIEVKVRKKRVLTTKQDESDAAGKRAAEDVSLRTAEAPEAPEAVPVKSVLDAEQIALRAEEARKRSELMARQAAELKEKQEKRRQQVTAQTEVKKESTQVQEPGSETAAVSGSVAATQPESTETAAVTPSATITVTTQTTPAAKERAPQKPAVKPEEKGEKKKKQARQQEAWKDEPVKRRESKARGDVSGGQEWRMRKDKHGRSRSDESQSQHAFSAPTEPVVHEVLIPETISVAVLAQKMAVKAAEVIKVLMKMGNMVTINQMLDQDTAMIVVEEMGHVAKIAAPDNPEAFLEEVDLSPDEARMESRAPVVTVMGHVDHGKTSLLDYIRRTRVAGGEAGGITQHIGAYHVKTSRGVVTFLDTPGHEAFTAMRARGAKITDIVILVVAADDGVMPQTIEAVHHAKAASIPIVVAVNKMDKPEANLERIKQELVNHGVVPEDWGGDAMFIGVSAKTGQGIDELLEAVLLQAEVLELKAVRDAPAKGVIIESRLDKGRGPVATVLVQSGTLRRGDVVLTGAVFGKIRAMLDERGKSVSEAGTSIPVEIQGLSEVAAAGEVFIALSDERKAREIALFRQGKFRDVRLDKLHVAKMEDVFGHQEDISTLNLIIKADVQGSCEALAYALKKLETDEVKINIVHSGVGAIIESDINLALASKAVVIGFNCRADLGARKLIASTGVDVRYYNIIYEAVDEVKKALSGMMTPDRKEKILGLVDIREIYRISKVGVVAGCYVLEGLIRRDAPVRVLRDGVVIHSGSLDSLKRFKDDVKEVKSGFECGLSLKNFNDIQQGDQIEVYEIVETARVL.

Disordered regions lie at residues Thr-96–Glu-122 and Glu-158–Thr-302. Basic and acidic residues-rich tracts occupy residues Lys-98 to Ser-114 and Glu-158 to Arg-167. The segment covering Thr-181–Glu-206 has biased composition (polar residues). Low complexity predominate over residues Thr-207–Ala-225. Basic and acidic residues-rich tracts occupy residues Ala-226 to Glu-243 and Glu-253 to Gly-269. The region spanning Ser-390–Lys-559 is the tr-type G domain. A G1 region spans residues Gly-399–Thr-406. Gly-399–Thr-406 is a GTP binding site. The G2 stretch occupies residues Gly-424–His-428. Residues Asp-445–Gly-448 are G3. GTP contacts are provided by residues Asp-445 to His-449 and Asn-499 to Asp-502. Residues Asn-499–Asp-502 are G4. Positions Ser-535–Lys-537 are G5.

Belongs to the TRAFAC class translation factor GTPase superfamily. Classic translation factor GTPase family. IF-2 subfamily.

It is found in the cytoplasm. Its function is as follows. One of the essential components for the initiation of protein synthesis. Protects formylmethionyl-tRNA from spontaneous hydrolysis and promotes its binding to the 30S ribosomal subunits. Also involved in the hydrolysis of GTP during the formation of the 70S ribosomal complex. The polypeptide is Translation initiation factor IF-2 (Nitrosomonas eutropha (strain DSM 101675 / C91 / Nm57)).